The primary structure comprises 37 residues: EPCIPKWKSCVNRHGDCCAGLECWKRRKSFEVCVPKV.

3 cysteine pairs are disulfide-bonded: cysteine 3–cysteine 18, cysteine 10–cysteine 23, and cysteine 17–cysteine 33.

It belongs to the psalmotoxin-1 family. As to expression, expressed by the venom gland.

Its subcellular location is the secreted. Its function is as follows. This toxin acts on different isoforms of acid-sensing ion channel ASIC1 in a similar manner to psalmotoxin-1 (AC P60514). On ASIC1a homotrimer, it provokes a pH-dependent inhibition (IC(50)=39.7 nM on human and IC(50)=1.3 nM on rat channels), whereas it potentiates ASIC1b homotrimer and ASIC1a-ASIC1b heterotrimer (EC(50)=178.1 nM on human ASIC1b, EC(50)=46.5 nM on rat ASIC1b and EC(50)=17.4 nM on rat ASIC1a-ASIC1b channels). On rat ASIC1a, it acts by inhibiting channel currents by shifting the pH of half-maximal effect (pH(50)) of steady-state desensitization and activation to more alkaline values. This Heteroscodra maculata (Togo starburst tarantula) protein is Pi-theraphotoxin-Hm3a.